Reading from the N-terminus, the 319-residue chain is 8-methylmenaquinol:fumarate reductase iron-sulfur subunit (319 aa).

One can recognise a 2Fe-2S ferredoxin-type domain in the interval methionine 1 to histidine 96. Residues cysteine 51, cysteine 56, cysteine 59, and cysteine 71 each contribute to the [2Fe-2S] cluster site. 2 consecutive 4Fe-4S ferredoxin-type domains span residues phenylalanine 139–tyrosine 168 and valine 193–isoleucine 224. Residues cysteine 148, cysteine 151, cysteine 154, cysteine 158, cysteine 204, cysteine 207, cysteine 210, and cysteine 214 each coordinate [4Fe-4S] cluster.

The protein belongs to the succinate dehydrogenase/fumarate reductase iron-sulfur protein family. The MFR complex is composed of three subunits: a flavoprotein (SdhA), an iron-sulfur protein (SdhB), and one hydrophobic anchor protein (SdhE). [2Fe-2S] cluster is required as a cofactor. It depends on [4Fe-4S] cluster as a cofactor.

The protein localises to the periplasm. The protein resides in the cell membrane. The enzyme catalyses 8-methylmenaquinone-6 + succinate = 8-methylmenaquinol-6 + fumarate. Iron-sulfur subunit of 8-methylmenaquinol:fumarate reductase (MFR), that catalyzes the reduction of fumarate using 8-methylmenaquinol-6 as electron donor. The complex shows no succinate oxidation activity. Is involved in anaerobic metabolism. This chain is 8-methylmenaquinol:fumarate reductase iron-sulfur subunit, found in Wolinella succinogenes (strain ATCC 29543 / DSM 1740 / CCUG 13145 / JCM 31913 / LMG 7466 / NCTC 11488 / FDC 602W) (Vibrio succinogenes).